The sequence spans 449 residues: Tubulin beta chain (449 aa).

8 residues coordinate GTP: Q11, E69, S138, G142, T143, G144, N204, and N226. E69 lines the Mg(2+) pocket.

It belongs to the tubulin family. In terms of assembly, dimer of alpha and beta chains. A typical microtubule is a hollow water-filled tube with an outer diameter of 25 nm and an inner diameter of 15 nM. Alpha-beta heterodimers associate head-to-tail to form protofilaments running lengthwise along the microtubule wall with the beta-tubulin subunit facing the microtubule plus end conferring a structural polarity. Microtubules usually have 13 protofilaments but different protofilament numbers can be found in some organisms and specialized cells. Requires Mg(2+) as cofactor.

The protein localises to the cytoplasm. Its subcellular location is the cytoskeleton. In terms of biological role, tubulin is the major constituent of microtubules, a cylinder consisting of laterally associated linear protofilaments composed of alpha- and beta-tubulin heterodimers. Microtubules grow by the addition of GTP-tubulin dimers to the microtubule end, where a stabilizing cap forms. Below the cap, tubulin dimers are in GDP-bound state, owing to GTPase activity of alpha-tubulin. The sequence is that of Tubulin beta chain (TUB2) from Candida albicans (Yeast).